The primary structure comprises 525 residues: Glutamate synthase large subunit-like protein YerD (525 aa).

The chain crosses the membrane as a helical span at residues 4–24 (IIIALIAFIIGIIAIPIVLFA).

This sequence belongs to the glutamate synthase family.

It is found in the cell membrane. The sequence is that of Glutamate synthase large subunit-like protein YerD (yerD) from Bacillus subtilis (strain 168).